The sequence spans 178 residues: Large ribosomal subunit protein uL6 (178 aa).

This sequence belongs to the universal ribosomal protein uL6 family. In terms of assembly, part of the 50S ribosomal subunit.

Its function is as follows. This protein binds to the 23S rRNA, and is important in its secondary structure. It is located near the subunit interface in the base of the L7/L12 stalk, and near the tRNA binding site of the peptidyltransferase center. In Natranaerobius thermophilus (strain ATCC BAA-1301 / DSM 18059 / JW/NM-WN-LF), this protein is Large ribosomal subunit protein uL6.